The following is an 86-amino-acid chain: Small ribosomal subunit protein bS20 (86 aa).

The segment at Met-1 to Arg-25 is disordered. Over residues Ser-7–Arg-25 the composition is skewed to basic residues.

Belongs to the bacterial ribosomal protein bS20 family.

Its function is as follows. Binds directly to 16S ribosomal RNA. The polypeptide is Small ribosomal subunit protein bS20 (Vesicomyosocius okutanii subsp. Calyptogena okutanii (strain HA)).